We begin with the raw amino-acid sequence, 69 residues long: Conotoxin reg3.6 (69 aa).

Residues M1 to A20 form the signal peptide. Positions L21–R52 are excised as a propeptide. 3 disulfide bridges follow: C54-C68, C55-C66, and C60-C69.

It belongs to the conotoxin M superfamily. In terms of tissue distribution, expressed by the venom duct.

The protein resides in the secreted. The protein is Conotoxin reg3.6 of Conus regius (Crown cone).